Reading from the N-terminus, the 250-residue chain is L-ascorbate peroxidase 1, cytosolic (250 aa).

The active-site Proton acceptor is His-42. The interval Val-113–Gly-137 is disordered. His-163 serves as a coordination point for heme b. K(+) contacts are provided by Thr-164, Thr-180, Asn-182, and Asp-187.

It belongs to the peroxidase family. Ascorbate peroxidase subfamily. Heme b serves as cofactor.

Its subcellular location is the cytoplasm. It catalyses the reaction L-ascorbate + H2O2 = L-dehydroascorbate + 2 H2O. Functionally, plays a key role in hydrogen peroxide removal. The chain is L-ascorbate peroxidase 1, cytosolic (APX1) from Oryza sativa subsp. indica (Rice).